The chain runs to 108 residues: Ribonuclease P protein component 4 (108 aa).

4 residues coordinate Zn(2+): C60, C63, C86, and C89.

It belongs to the eukaryotic/archaeal RNase P protein component 4 family. Consists of a catalytic RNA component and at least 4-5 protein subunits. Zn(2+) is required as a cofactor.

The protein localises to the cytoplasm. The catalysed reaction is Endonucleolytic cleavage of RNA, removing 5'-extranucleotides from tRNA precursor.. Its function is as follows. Part of ribonuclease P, a protein complex that generates mature tRNA molecules by cleaving their 5'-ends. In Sulfurisphaera tokodaii (strain DSM 16993 / JCM 10545 / NBRC 100140 / 7) (Sulfolobus tokodaii), this protein is Ribonuclease P protein component 4.